Reading from the N-terminus, the 478-residue chain is Transcription factor PIF1 (478 aa).

Residue T10 is modified to Phosphothreonine; by CK2. 5 disordered regions span residues 56–80 (LHTK…QPSS), 122–144 (VSQV…PVRN), 172–210 (VRES…GGGA), 230–294 (TSSS…LSER), and 391–478 (TQTH…HTTG). Low complexity predominate over residues 69–80 (LPSMDPQQQPSS). Residues 179-189 (SPSATPSAAAS) show a composition bias toward low complexity. The residue at position 197 (T197) is a Phosphothreonine; by CK2. S202 carries the phosphoserine; by CK2 modification. Basic and acidic residues-rich tracts occupy residues 238 to 272 (SEIE…ETKQ) and 284 to 294 (RAAEVHNLSER). Positions 284 to 333 (RAAEVHNLSERKRRDRINERMKALQELIPRCNKSDKASMLDEAIEYMKSL) constitute a bHLH domain. Residues 415–426 (PNQQYDPTSGQP) are compositionally biased toward polar residues. Phosphoserine; by CK2 occurs at positions 464, 465, 466, and 469. A compositionally biased stretch (basic and acidic residues) spans 465–478 (SSKESEDHGNHTTG).

As to quaternary structure, homodimer. Interacts with the photoactivated conformer (Pfr) of phytochromes A and B, PHYA and PHYB. Also interacts with APRR1/TOC1. Binds to RGL2, RGA and FHY3 (via N-terminus). Associates to PTAC12/HMR/PAP5 which acts as a transcriptional coactivator. Binds directly to PCH1 and PCHL; this interaction facilitates its association with phyB and its subsequent light-induced degradation. Phosphorylated at Thr-10, Thr-197, Ser-202, Ser-464, Ser-465, Ser-466 and Ser-469 by CK2. Phosphorylated and ubiquitinated after an exposure to light (especially red and far-red), in a phytochrome-dependent manner. Modified proteins undergo a proteasome-dependent degradation. Its stability and degradation plays a central role in photomorphogenesis of seedlings. Mainly expressed in leaves, stems and seedlings, and, to a lower extent, in fruits, flowers and roots.

The protein resides in the nucleus. Its activity is regulated as follows. DNA-binding ability is inhibited by PCH1 and PCHL to negatively regulate the expressions of its target genes. Functionally, transcription activator. Negatively regulates chlorophyll biosynthesis and seed germination in the dark, and lightinduced degradation of PIF1 relieves this negative regulation to promote photomorphogenesis. Binds to the G-box motif (5'-CACGTG-3') found in many light-regulated promoters. Promotes the expression of SOM, and thus modulates responses to abscisic acid (ABA) and gibberellic acid (GA). This chain is Transcription factor PIF1, found in Arabidopsis thaliana (Mouse-ear cress).